Consider the following 775-residue polypeptide: WD repeat-containing protein pop1 (775 aa).

The 48-residue stretch at 298-345 folds into the F-box domain; sequence KNFLTGFPAEITNLVLTHLDAPSLCAVSQVSHHWYKLVSSNEELWKSL. WD repeat units lie at residues 444–472, 484–538, 575–603, 615–645, and 657–687; these read EHEG…RVWD, GHTS…RLWS, GHTD…RVWK, GHVG…RIWN, and GHSN…RVWD.

In terms of assembly, homodimer and heterodimer with pop2. Binds to cdc18, phosphorylated cig2, cul1, pip1 and skp1.

It localises to the nucleus. Its function is as follows. Involved in maintenance of ploidy through proteasome dependent degradation of CDK inhibitor rum1 and S-phase initiator cdc18. Functions as a recognition factor for rum1 and cdc18, which are subsequently ubiquitinated and targeted to the 26S proteasome for degradation. Together with pop2, required for cig2 instability during G2 and M phase and cig2 degradation in exponentially growing cells. Regulates cell-cycle progression under starvation through the rum1 protein. In Schizosaccharomyces pombe (strain 972 / ATCC 24843) (Fission yeast), this protein is WD repeat-containing protein pop1 (pop1).